Consider the following 326-residue polypeptide: Light-induced protein, chloroplastic (326 aa).

Residues 1 to 63 (MASISSLNQI…TNPKPKFTAQ (63 aa)) constitute a chloroplast transit peptide.

Belongs to the LIPC family. Associates with the major light-harvesting antenna complex polypeptides of the PSII oxygen-evolving complex. Expressed at high levels in leaves and in the petals and anthers of flowers.

The protein localises to the plastid. Its subcellular location is the chloroplast thylakoid membrane. Required for normal plant growth. May be both photoprotective and play an ancillary role in photosynthesis. May structurally stabilize thylakoids during osmotic and oxidative stress. This chain is Light-induced protein, chloroplastic, found in Solanum demissum (Wild potato).